We begin with the raw amino-acid sequence, 246 residues long: Short chain dehydrogenase/reductase dmxR12 (246 aa).

4 residues coordinate NADP(+): I15, S34, K125, and K164. Catalysis depends on K164, which acts as the Lowers pKa of active site Tyr.

This sequence belongs to the short-chain dehydrogenases/reductases (SDR) family.

The protein operates within secondary metabolite biosynthesis. In terms of biological role, short chain dehydrogenase/reductase; part of the gene cluster that mediates the biosynthesis of the dimeric xanthones cryptosporioptides. The pathway begins with the synthesis of atrochrysone thioester by the polyketide synthase dmx-nrPKS. The atrochrysone carboxyl ACP thioesterase dmxR1 then breaks the thioester bond and releases the atrochrysone carboxylic acid from dmx-nrPKS. Atrochrysone carboxylic acid is decarboxylated by the decarboxylase dmxR15, and oxidized by the anthrone oxygenase dmxR16 to yield emodin. Emodin is then reduced to emodin hydroquinone by the oxidoreductase dmxR7. A-ring reduction by the short chain dehydrogenase dmxR18, dehydration by the scytalone dehydratase-like protein dmxR17 and probable spontaneous re-oxidation, results in overall deoxygenation to chrysophanol. Baeyer-Villiger oxidation by the Baeyer-Villiger monooxygenase (BVMO) dmxR6 then yields monodictylactone in equilibrium with monodictyphenone. In the case of the cryptosporioptides biosynthesis, monodictylactone is reduced at C-12 to an alcohol (by the short chain dehydrogenases dmxR12 or dmxR8) and hydroxylated at C-5 by dmxR9, yielding the electron-rich aromatic which could eliminate H(2)O to form the ortho-quinonemethide, followed by tautomerisation to paraquinone and complete the formal reduction to produce the 10-methylgroup. Conjugate addition of C-4a-OH to the resulting paraquinone by the monooxygenase dmxR10 then gives cyclohexadienone, which is then reduced at C-5 by the short chain dehydrogenase dmxR3 to give the dihydroxanthone. The 6,7-epoxide in the cryptosporioptides could be introduced by the cytochrome P450 monooxygenase dmxL3. The highly reducing PKS dmxL2 manufactures butyrate, which is further carboxylated by dmxL1 to form ethylmalonate. It is not yet clear whether the carboxylation occurs while the butyrate is attached to the ACP of dmxL2, but this unusual fungal metabolite could then be esterified to O-5 by the O-acetyltransferase dmxR13. Finally, dimerization performed by dmxR5 gives the observed dimers cryptosporioptides A, B and C as the final products of the pathway. In Cryptosporiopsis sp. (strain 8999), this protein is Short chain dehydrogenase/reductase dmxR12.